The chain runs to 506 residues: RNA-splicing ligase RtcB homolog (506 aa).

Mn(2+)-binding residues include Asp-120, Cys-123, His-228, His-260, and His-354. Residue 227–231 (NHYAE) participates in GMP binding. Residues 354–355 (HN), 403–406 (GGTM), Ser-410, 429–432 (HGAG), and Lys-505 each bind GMP. The active-site GMP-histidine intermediate is His-429.

It belongs to the RtcB family. In terms of assembly, catalytic component of the tRNA-splicing ligase complex. It depends on Mn(2+) as a cofactor.

The enzyme catalyses a 3'-end 3'-phospho-ribonucleotide-RNA + a 5'-end dephospho-ribonucleoside-RNA + GTP = a ribonucleotidyl-ribonucleotide-RNA + GMP + diphosphate. It carries out the reaction a 3'-end 2',3'-cyclophospho-ribonucleotide-RNA + a 5'-end dephospho-ribonucleoside-RNA + GTP + H2O = a ribonucleotidyl-ribonucleotide-RNA + GMP + diphosphate + H(+). Its function is as follows. Catalytic subunit of the tRNA-splicing ligase complex that acts by directly joining spliced tRNA halves to mature-sized tRNAs by incorporating the precursor-derived splice junction phosphate into the mature tRNA as a canonical 3',5'-phosphodiester. May act as an RNA ligase with broad substrate specificity, and may function toward other RNAs. The chain is RNA-splicing ligase RtcB homolog from Plasmodium falciparum (isolate 3D7).